A 391-amino-acid polypeptide reads, in one-letter code: Probable malate dehydrogenase 1 (391 aa).

68 to 74 (GAAGQIA) serves as a coordination point for NAD(+). 2 residues coordinate substrate: Arg-149 and Arg-155. NAD(+)-binding positions include Asn-162, Gln-169, and 186–188 (VGN). 2 residues coordinate substrate: Asn-188 and Arg-219. The active-site Proton acceptor is His-244.

Belongs to the LDH/MDH superfamily. MDH type 2 family. In terms of assembly, homodimer.

The catalysed reaction is (S)-malate + NAD(+) = oxaloacetate + NADH + H(+). In terms of biological role, catalyzes the reversible oxidation of malate to oxaloacetate. The sequence is that of Probable malate dehydrogenase 1 (mdhA) from Dictyostelium discoideum (Social amoeba).